The sequence spans 189 residues: uncharacterized protein (189 aa).

This sequence belongs to the mimivirus R457/R459 family.

The protein resides in the virion. This is an uncharacterized protein from Acanthamoeba polyphaga mimivirus (APMV).